The chain runs to 582 residues: Two-component response regulator ORR26 (582 aa).

One can recognise a Response regulatory domain in the interval 11–126 (RVLVVDDDPT…ELRNIWQHVY (116 aa)). 4-aspartylphosphate is present on Asp62. The span at 166 to 182 (SDTMRKRKDVDKDHADQ) shows a compositional bias: basic and acidic residues. Residues 166-187 (SDTMRKRKDVDKDHADQESSDG) form a disordered region. A DNA-binding region (myb-like GARP) is located at residues 189–248 (TVKKARVVWSVDLHQKFVNAVNQIGFDKVGPKKILDLMNVPGLTRENVASHLQKYRLYLS).

This sequence belongs to the ARR family. Type-B subfamily. Two-component system major event consists of a His-to-Asp phosphorelay between a sensor histidine kinase (HK) and a response regulator (RR). In plants, the His-to-Asp phosphorelay involves an additional intermediate named Histidine-containing phosphotransfer protein (HPt). This multistep phosphorelay consists of a His-Asp-His-Asp sequential transfer of a phosphate group between first a His and an Asp of the HK protein, followed by the transfer to a conserved His of the HPt protein and finally the transfer to an Asp in the receiver domain of the RR protein.

It is found in the nucleus. Transcriptional activator that binds specific DNA sequence. Functions as a response regulator involved in His-to-Asp phosphorelay signal transduction system. Phosphorylation of the Asp residue in the receiver domain activates the ability of the protein to promote the transcription of target genes. May directly activate some type-A response regulators in response to cytokinins. The sequence is that of Two-component response regulator ORR26 from Oryza sativa subsp. japonica (Rice).